The following is a 350-amino-acid chain: Ribosomal RNA small subunit methyltransferase C (350 aa).

This sequence belongs to the methyltransferase superfamily. RsmC family. Monomer.

Its subcellular location is the cytoplasm. The catalysed reaction is guanosine(1207) in 16S rRNA + S-adenosyl-L-methionine = N(2)-methylguanosine(1207) in 16S rRNA + S-adenosyl-L-homocysteine + H(+). In terms of biological role, specifically methylates the guanine in position 1207 of 16S rRNA in the 30S particle. This chain is Ribosomal RNA small subunit methyltransferase C, found in Sodalis glossinidius (strain morsitans).